We begin with the raw amino-acid sequence, 364 residues long: MAFATLFDSLYCPEEHLDLFHDTAADDDLHLDLHLHQPPPPPPLLDDDLPALFHALRGKEDPLRPAADDDGYGGVSAREAAVGWALRAVARLGFSALTAALAVAYLDRCFLGGALRLGDRPWMARLAAVACVALAAKVEETRVPVLLDLQLCAAERADPNEAYVFEDKTVRRMELLVLSALGWRMHPVTPLSYLQPLLGTAHAARLHHCDTALLALMPDWRWPRHRPSAWAAAALLATAGWCGGGGGDDAELLALIDAPKDEMAECAKIISEEAAAAAAGGIVIGGENKRKGAAGLYSAPASPSGVIGASACFSCDSSSSSVDSLFAALEPPGRPIKRGAAAATTADPLPADEESRDAWPPYAA.

The tract at residues 331–364 is disordered; the sequence is PPGRPIKRGAAAATTADPLPADEESRDAWPPYAA. The span at 340–349 shows a compositional bias: low complexity; the sequence is AAAATTADPL.

This sequence belongs to the cyclin family. Cyclin D subfamily.

The sequence is that of Cyclin-D3-2 (CYCD3-2) from Oryza sativa subsp. japonica (Rice).